The primary structure comprises 161 residues: Cyclic pyranopterin monophosphate synthase (161 aa).

Substrate contacts are provided by residues 75 to 77 (MCH) and 115 to 116 (ME). Asp-130 is an active-site residue.

Belongs to the MoaC family. Homohexamer; trimer of dimers.

It catalyses the reaction (8S)-3',8-cyclo-7,8-dihydroguanosine 5'-triphosphate = cyclic pyranopterin phosphate + diphosphate. Its pathway is cofactor biosynthesis; molybdopterin biosynthesis. Catalyzes the conversion of (8S)-3',8-cyclo-7,8-dihydroguanosine 5'-triphosphate to cyclic pyranopterin monophosphate (cPMP). The polypeptide is Cyclic pyranopterin monophosphate synthase (Bacillus cereus (strain 03BB102)).